Consider the following 422-residue polypeptide: Replication factor C large subunit (422 aa).

63 to 70 (GPPGVGKT) contributes to the ATP binding site.

This sequence belongs to the activator 1 small subunits family. RfcL subfamily. Heteromultimer composed of small subunits (RfcS) and large subunits (RfcL).

Functionally, part of the RFC clamp loader complex which loads the PCNA sliding clamp onto DNA. This chain is Replication factor C large subunit, found in Pyrobaculum aerophilum (strain ATCC 51768 / DSM 7523 / JCM 9630 / CIP 104966 / NBRC 100827 / IM2).